A 150-amino-acid chain; its full sequence is Urease accessory protein UreE (150 aa).

This sequence belongs to the UreE family.

The protein localises to the cytoplasm. Its function is as follows. Involved in urease metallocenter assembly. Binds nickel. Probably functions as a nickel donor during metallocenter assembly. The protein is Urease accessory protein UreE of Streptococcus salivarius (strain 57.I).